Consider the following 80-residue polypeptide: Small ribosomal subunit protein bS16c (80 aa).

Belongs to the bacterial ribosomal protein bS16 family.

The protein resides in the plastid. Its subcellular location is the chloroplast. This Lotus japonicus (Lotus corniculatus var. japonicus) protein is Small ribosomal subunit protein bS16c.